A 69-amino-acid chain; its full sequence is Amphipathic peptide CT2 (69 aa).

Residues 1–23 (MKTQFVILIVAVVLLQLIANSEA) form the signal peptide. Residue F36 is modified to Phenylalanine amide. The propeptide occupies 40–69 (GLRNLDNLDDDIFEPEMSEADLRYLQDLLR).

The protein belongs to the non-disulfide-bridged peptide (NDBP) superfamily. Short antimicrobial peptide (group 4) family. Expressed by the venom gland.

It is found in the secreted. Its subcellular location is the target cell membrane. Its function is as follows. Amphipathic peptide that shows antibacterial activities against both Gram-positive (MIC=10 uM, 20 uM and 20 uM against S.aureus, B.subtilis and S.agalactiae, respectively) and Gram-negative bacteria (MIC=20 uM, 10 uM, and 10 uM against E.coli, S.typhi, and P.aeruginosa, respectively). Is mildly hemolytic at its MIC range, but shows a strong cytotoxic activity at higher concentrations, reaching 84% lysis at 50 uM. In Vaejovis mexicanus smithi (Mexican scorpion), this protein is Amphipathic peptide CT2.